The chain runs to 390 residues: 8-demethyl-8-(2-methoxy-alpha-L-rhamnosyl)-tetracenomycin-C 3'-O-methyltransferase (390 aa).

Residues 202-208, serine 217, aspartate 234, 252-253, and aspartate 275 contribute to the S-adenosyl-L-methionine site; these read ELGIGGY and SQ. Aspartate 275 serves as a coordination point for Mg(2+). The Proton acceptor role is filled by histidine 278. Residues glutamate 303 and aspartate 304 each coordinate Mg(2+).

It belongs to the methyltransferase OleY/MycE family. Mg(2+) is required as a cofactor.

It catalyses the reaction 8-demethyl-8-(2-O-methyl-alpha-L-rhamnosyl)-tetracenomycin C + S-adenosyl-L-methionine = 8-demethyl-8-(2,3-di-O-methyl-alpha-L-rhamnosyl)-tetracenomycin C + S-adenosyl-L-homocysteine + H(+). The protein operates within antibiotic biosynthesis. Functionally, O-methyltransferase involved in the biosynthesis of the permethylated L-rhamnose moiety of elloramycin, an antitumor polyketide. Mediates the methylation of the hydroxy groups at the 3'-position after the sugar moiety has been attached to the aglycon. The chain is 8-demethyl-8-(2-methoxy-alpha-L-rhamnosyl)-tetracenomycin-C 3'-O-methyltransferase from Streptomyces olivaceus.